A 282-amino-acid polypeptide reads, in one-letter code: Pantothenate synthetase (282 aa).

30–37 (MGALHAGH) is a binding site for ATP. The Proton donor role is filled by His-37. Gln-61 lines the (R)-pantoate pocket. Residue Gln-61 coordinates beta-alanine. An ATP-binding site is contributed by 147–150 (GEKD). Gln-153 serves as a coordination point for (R)-pantoate. ATP contacts are provided by residues Val-176 and 184-187 (LSSR).

This sequence belongs to the pantothenate synthetase family. In terms of assembly, homodimer.

Its subcellular location is the cytoplasm. The enzyme catalyses (R)-pantoate + beta-alanine + ATP = (R)-pantothenate + AMP + diphosphate + H(+). It participates in cofactor biosynthesis; (R)-pantothenate biosynthesis; (R)-pantothenate from (R)-pantoate and beta-alanine: step 1/1. In terms of biological role, catalyzes the condensation of pantoate with beta-alanine in an ATP-dependent reaction via a pantoyl-adenylate intermediate. The sequence is that of Pantothenate synthetase from Bacteroides fragilis (strain YCH46).